Consider the following 535-residue polypeptide: Cytochrome P450 monooxygenase claQ (535 aa).

2 consecutive transmembrane segments (helical) span residues 7–27 and 225–245; these read IGTW…KLVG and YFAI…NLPT. Cys-472 lines the heme pocket.

The protein belongs to the cytochrome P450 family. The cofactor is heme.

It is found in the membrane. It participates in secondary metabolite biosynthesis; terpenoid biosynthesis. Cytochrome P450 monooxygenase; part of the gene cluster that mediates the biosynthesis of clavilactone A, a meroterpenoid that features a unique benzo-fused ten-membered carbocyclic ring unit with an alpha,beta-epoxy-gamma-lactone moiety, forming an intriguing 10/5/3 tricyclic nested skeleton. Cytochrome P450 monooxygenases claO, claP, claQ, claU, and claW are close orthologs, suggesting that a redundant function or pseudogenes are present in the cla cluster. These monoxygenases are not involved in clavilactone A biosynthesis nor its modification. ClaR, ClaS and ClaT are sufficient to produce clavilactone A. The biosynthesis begins with the prenyltransferase claS that transfers geranyl pyrophosphate (GPP) to hydroquinone to produces geranylhydroquinone. The cytochrome P450 monooxygenase claR then catalyzes the diradical coupling reaction between the intramolecular hydroquinone and allyl moieties to form the benzo-fused ten-membered carbocyclic ring unit of wigantol. Finally the cytochrome P450 monooxygenase claT exquisitely and stereoselectively assembles the alpha,beta-epoxy-gamma-lactone moiety, producing clavilactone A via arnebinol A. This is Cytochrome P450 monooxygenase claQ from Ampulloclitocybe clavipes (Club foot).